A 305-amino-acid polypeptide reads, in one-letter code: Mitogen-activated protein kinase kinase 10 (305 aa).

Serine 34 is subject to Phosphoserine. One can recognise a Protein kinase domain in the interval 48 to 302 (LEKLSVLGQG…VEELLRHSFV (255 aa)). ATP contacts are provided by residues 54–62 (LGQGSGGTV) and lysine 77. Catalysis depends on aspartate 165, which acts as the Proton acceptor. Threonine 200 carries the post-translational modification Phosphothreonine.

This sequence belongs to the protein kinase superfamily. STE Ser/Thr protein kinase family. MAP kinase kinase subfamily. Interacts with P.syringae type III effector HopF2.

The enzyme catalyses L-seryl-[protein] + ATP = O-phospho-L-seryl-[protein] + ADP + H(+). The catalysed reaction is L-threonyl-[protein] + ATP = O-phospho-L-threonyl-[protein] + ADP + H(+). It carries out the reaction L-tyrosyl-[protein] + ATP = O-phospho-L-tyrosyl-[protein] + ADP + H(+). The protein is Mitogen-activated protein kinase kinase 10 (MKK10) of Arabidopsis thaliana (Mouse-ear cress).